We begin with the raw amino-acid sequence, 103 residues long: MSKFENVSVAKKANVYFDGACVSHSIEFPDGTAKSVGVILPATLTFGTTAPEVMELVEGHCRVTLPGADAPVTFRGGESFEVPADSEFTIEVLETVHYVCHYG.

The protein belongs to the nucleoside phosphorylase PpnP family.

The catalysed reaction is a purine D-ribonucleoside + phosphate = a purine nucleobase + alpha-D-ribose 1-phosphate. It catalyses the reaction adenosine + phosphate = alpha-D-ribose 1-phosphate + adenine. It carries out the reaction cytidine + phosphate = cytosine + alpha-D-ribose 1-phosphate. The enzyme catalyses guanosine + phosphate = alpha-D-ribose 1-phosphate + guanine. The catalysed reaction is inosine + phosphate = alpha-D-ribose 1-phosphate + hypoxanthine. It catalyses the reaction thymidine + phosphate = 2-deoxy-alpha-D-ribose 1-phosphate + thymine. It carries out the reaction uridine + phosphate = alpha-D-ribose 1-phosphate + uracil. The enzyme catalyses xanthosine + phosphate = alpha-D-ribose 1-phosphate + xanthine. Its function is as follows. Catalyzes the phosphorolysis of diverse nucleosides, yielding D-ribose 1-phosphate and the respective free bases. Can use uridine, adenosine, guanosine, cytidine, thymidine, inosine and xanthosine as substrates. Also catalyzes the reverse reactions. The sequence is that of Pyrimidine/purine nucleoside phosphorylase from Nocardia farcinica (strain IFM 10152).